Here is a 240-residue protein sequence, read N- to C-terminus: UDP-2,3-diacylglucosamine hydrolase (240 aa).

5 residues coordinate Mn(2+): Asp9, His11, Asp43, Asn81, and His116. 81–82 (NR) serves as a coordination point for substrate. Positions 124, 162, 166, 169, and 197 each coordinate substrate. His197 and His199 together coordinate Mn(2+).

Belongs to the LpxH family. It depends on Mn(2+) as a cofactor.

It is found in the cell inner membrane. The catalysed reaction is UDP-2-N,3-O-bis[(3R)-3-hydroxytetradecanoyl]-alpha-D-glucosamine + H2O = 2-N,3-O-bis[(3R)-3-hydroxytetradecanoyl]-alpha-D-glucosaminyl 1-phosphate + UMP + 2 H(+). It functions in the pathway glycolipid biosynthesis; lipid IV(A) biosynthesis; lipid IV(A) from (3R)-3-hydroxytetradecanoyl-[acyl-carrier-protein] and UDP-N-acetyl-alpha-D-glucosamine: step 4/6. Hydrolyzes the pyrophosphate bond of UDP-2,3-diacylglucosamine to yield 2,3-diacylglucosamine 1-phosphate (lipid X) and UMP by catalyzing the attack of water at the alpha-P atom. Involved in the biosynthesis of lipid A, a phosphorylated glycolipid that anchors the lipopolysaccharide to the outer membrane of the cell. The chain is UDP-2,3-diacylglucosamine hydrolase from Neisseria meningitidis serogroup C / serotype 2a (strain ATCC 700532 / DSM 15464 / FAM18).